The following is a 962-amino-acid chain: Protease 3 (962 aa).

The signal sequence occupies residues 1–23; sequence MPRSTWFKALLLLVALWAPLSQA. Residue histidine 88 coordinates Zn(2+). The active-site Proton acceptor is the glutamate 91. Zn(2+)-binding residues include histidine 92 and glutamate 169.

The protein belongs to the peptidase M16 family. In terms of assembly, monomer. Zn(2+) serves as cofactor.

Its subcellular location is the periplasm. It catalyses the reaction Preferential cleavage of 16-Tyr-|-Leu-17 and 25-Phe-|-Tyr-26 bonds of oxidized insulin B chain. Also acts on other substrates of Mw less than 7 kDa such as insulin and glucagon.. Endopeptidase that degrades small peptides of less than 7 kDa, such as glucagon and insulin. This Escherichia coli (strain K12) protein is Protease 3 (ptrA).